Reading from the N-terminus, the 431-residue chain is Serine hydroxymethyltransferase 2 (431 aa).

(6S)-5,6,7,8-tetrahydrofolate is bound by residues Leu131 and 135–137; that span reads GHL. Residue Lys240 is modified to N6-(pyridoxal phosphate)lysine. Glu256 provides a ligand contact to (6S)-5,6,7,8-tetrahydrofolate.

The protein belongs to the SHMT family. Homodimer. Pyridoxal 5'-phosphate is required as a cofactor.

Its subcellular location is the cytoplasm. The catalysed reaction is (6R)-5,10-methylene-5,6,7,8-tetrahydrofolate + glycine + H2O = (6S)-5,6,7,8-tetrahydrofolate + L-serine. The protein operates within one-carbon metabolism; tetrahydrofolate interconversion. It functions in the pathway amino-acid biosynthesis; glycine biosynthesis; glycine from L-serine: step 1/1. In terms of biological role, catalyzes the reversible interconversion of serine and glycine with tetrahydrofolate (THF) serving as the one-carbon carrier. This reaction serves as the major source of one-carbon groups required for the biosynthesis of purines, thymidylate, methionine, and other important biomolecules. Also exhibits THF-independent aldolase activity toward beta-hydroxyamino acids, producing glycine and aldehydes, via a retro-aldol mechanism. The polypeptide is Serine hydroxymethyltransferase 2 (Vibrio vulnificus (strain YJ016)).